Consider the following 200-residue polypeptide: Nucleoside triphosphate pyrophosphatase (200 aa).

Asp79 functions as the Proton acceptor in the catalytic mechanism.

It belongs to the Maf family. A divalent metal cation is required as a cofactor.

The protein localises to the cytoplasm. It carries out the reaction a ribonucleoside 5'-triphosphate + H2O = a ribonucleoside 5'-phosphate + diphosphate + H(+). It catalyses the reaction a 2'-deoxyribonucleoside 5'-triphosphate + H2O = a 2'-deoxyribonucleoside 5'-phosphate + diphosphate + H(+). In terms of biological role, nucleoside triphosphate pyrophosphatase. May have a dual role in cell division arrest and in preventing the incorporation of modified nucleotides into cellular nucleic acids. This is Nucleoside triphosphate pyrophosphatase from Legionella pneumophila (strain Paris).